The primary structure comprises 543 residues: Plant intracellular Ras-group-related LRR protein 5 (543 aa).

LRR repeat units lie at residues 239-262, 264-284, 285-307, 309-331, 332-354, 356-377, 378-400, 402-424, 426-448, and 449-470; these read LQDVTELDLSENRIMALPSTIGSL, YLTKLDLHSNQLINLPDAFGE, LSNLIDLDLHANQLKSLPSSFGN, TSLANLDLSSNMLKALPDCLGKL, ANLRRLIVETNELEELPYTIGSC, SLVELRLDFNQLKALPEAIGKL, EKLEILTLHYNRIKGLPTTVGSL, RLRELDVSFNEVEVIPENICFAT, LVKLNLSRNFADLRALPKSIGNL, and EMLEELDISSNQIRVLPDSFRC. The stretch at 472–494 is one LRR 11; degenerate repeat; the sequence is SRLRVFHADETPLEFPPREVVKL. A GVYW; degenerate motif is present at residues 495–502; the sequence is GAQAVVKY.

It belongs to the SHOC2 family. In terms of tissue distribution, widely expressed.

In terms of biological role, leucine-rich repeat protein that likely mediates protein interactions, possibly in the context of signal transduction. This chain is Plant intracellular Ras-group-related LRR protein 5 (IRL5), found in Oryza sativa subsp. japonica (Rice).